A 168-amino-acid polypeptide reads, in one-letter code: uncharacterized protein (168 aa).

A helical membrane pass occupies residues 36-56; the sequence is LNWWQLIVVVGIAISGIAAIA. Asn-74 is a glycosylation site (N-linked (GlcNAc...) asparagine; by host). The next 3 helical transmembrane spans lie at 86–106, 115–135, and 143–163; these read FIII…LAWL, KLLT…ALTI, and MVKL…GFFI. Residue Asn-164 is glycosylated (N-linked (GlcNAc...) asparagine; by host).

It localises to the membrane. This is an uncharacterized protein from Acanthamoeba polyphaga mimivirus (APMV).